The following is a 311-amino-acid chain: Heme A synthase (311 aa).

Topologically, residues 1–6 are cytoplasmic; the sequence is MQRFIK. The chain crosses the membrane as a helical span at residues 7 to 27; it reads WLAVITSLDLLIVLLGGALVT. At 28–62 the chain is on the extracellular side; sequence KTGSGQGCGKSWPLCNGEFVPSNLSMETIIELSHR. Cys-35 and Cys-42 form a disulfide bridge. Residue Glu-58 is part of the active site. Heme o is bound at residue His-61. A helical membrane pass occupies residues 63–83; sequence LTSGSAGILVTLLCILSWKYY. Residues 84-91 are Cytoplasmic-facing; that stretch reads KHVRETKT. A helical transmembrane segment spans residues 92-112; sequence LAILSFVFLVAQALMGAAAVV. The Extracellular portion of the chain corresponds to 113–121; that stretch reads WGQMPAVLA. A helical transmembrane segment spans residues 122 to 142; it reads IHFGISLISFASVILLTCLIF. His-123 is a heme o binding site. The Cytoplasmic portion of the chain corresponds to 143–159; that stretch reads EIDQKFDARSLIMDKKM. A helical membrane pass occupies residues 160–180; sequence KFHIYGVTIYSYIVVYTGALV. The Extracellular segment spans residues 181–211; sequence RHERASLACPDFPLCSKNRPMPTQLHEWVQM. Cys-189 and Cys-195 form a disulfide bridge. A helical transmembrane segment spans residues 212–232; the sequence is GHRVAAMLIFAWILYAMILAI. His-213 lines the heme b pocket. At 233-243 the chain is on the cytoplasmic side; that stretch reads RHYKQQPVVYW. The helical transmembrane segment at 244–264 threads the bilayer; the sequence is GWIISFILVTLQAVVGVLVVF. Residues 265-271 lie on the Extracellular side of the membrane; sequence TNASLAM. A helical membrane pass occupies residues 272 to 292; that stretch reads ALLHSLFISCLFAVLCYLVML. His-275 is a binding site for heme b. At 293-311 the chain is on the cytoplasmic side; it reads GTRIKVNAKEAGSTSKQTK.

This sequence belongs to the COX15/CtaA family. Type 1 subfamily. As to quaternary structure, interacts with CtaB. Requires heme b as cofactor.

It is found in the cell membrane. The catalysed reaction is Fe(II)-heme o + 2 A + H2O = Fe(II)-heme a + 2 AH2. Its pathway is porphyrin-containing compound metabolism; heme A biosynthesis; heme A from heme O: step 1/1. In terms of biological role, catalyzes the conversion of heme O to heme A by two successive hydroxylations of the methyl group at C8. The first hydroxylation forms heme I, the second hydroxylation results in an unstable dihydroxymethyl group, which spontaneously dehydrates, resulting in the formyl group of heme A. The polypeptide is Heme A synthase (Bacillus cereus (strain G9842)).